The chain runs to 414 residues: DNA primase large subunit PriL (414 aa).

4 residues coordinate [4Fe-4S] cluster: C251, C352, C370, and C376.

This sequence belongs to the eukaryotic-type primase large subunit family. In terms of assembly, heterodimer of a small subunit (PriS) and a large subunit (PriL). [4Fe-4S] cluster serves as cofactor.

In terms of biological role, regulatory subunit of DNA primase, an RNA polymerase that catalyzes the synthesis of short RNA molecules used as primers for DNA polymerase during DNA replication. Stabilizes and modulates the activity of the small subunit, increasing the rate of DNA synthesis, and conferring RNA synthesis capability. The DNA polymerase activity may enable DNA primase to also catalyze primer extension after primer synthesis. May also play a role in DNA repair. In Methanocaldococcus jannaschii (strain ATCC 43067 / DSM 2661 / JAL-1 / JCM 10045 / NBRC 100440) (Methanococcus jannaschii), this protein is DNA primase large subunit PriL.